Here is a 1295-residue protein sequence, read N- to C-terminus: Phosphoribosylformylglycinamidine synthase (1295 aa).

Residues 302–327 form a disordered region; sequence APFSGAATGSGGEIRDEGATGRGSKP. ATP contacts are provided by residues 306 to 317 and alanine 677; that span reads GAATGSGGEIRD. Mg(2+) is bound by residues aspartate 678, glutamate 717, asparagine 721, and aspartate 884. Position 886 (serine 886) interacts with ATP. In terms of domain architecture, Glutamine amidotransferase type-1 spans 1042–1295; sequence MAILREQGVN…MFRNARVYLG (254 aa). The Nucleophile role is filled by cysteine 1135. Catalysis depends on residues histidine 1260 and glutamate 1262.

It in the N-terminal section; belongs to the FGAMS family. As to quaternary structure, monomer.

It is found in the cytoplasm. It carries out the reaction N(2)-formyl-N(1)-(5-phospho-beta-D-ribosyl)glycinamide + L-glutamine + ATP + H2O = 2-formamido-N(1)-(5-O-phospho-beta-D-ribosyl)acetamidine + L-glutamate + ADP + phosphate + H(+). It functions in the pathway purine metabolism; IMP biosynthesis via de novo pathway; 5-amino-1-(5-phospho-D-ribosyl)imidazole from N(2)-formyl-N(1)-(5-phospho-D-ribosyl)glycinamide: step 1/2. Phosphoribosylformylglycinamidine synthase involved in the purines biosynthetic pathway. Catalyzes the ATP-dependent conversion of formylglycinamide ribonucleotide (FGAR) and glutamine to yield formylglycinamidine ribonucleotide (FGAM) and glutamate. The chain is Phosphoribosylformylglycinamidine synthase from Pseudoalteromonas atlantica (strain T6c / ATCC BAA-1087).